The primary structure comprises 279 residues: Pantothenate synthetase (279 aa).

26–33 (MGALHSGH) serves as a coordination point for ATP. The Proton donor role is filled by His-33. Gln-57 is a binding site for (R)-pantoate. Gln-57 contacts beta-alanine. 147–150 (GQKD) contacts ATP. A (R)-pantoate-binding site is contributed by Gln-153. Residues Ile-176 and 184 to 187 (ESSR) each bind ATP.

It belongs to the pantothenate synthetase family. In terms of assembly, homodimer.

The protein localises to the cytoplasm. It catalyses the reaction (R)-pantoate + beta-alanine + ATP = (R)-pantothenate + AMP + diphosphate + H(+). It functions in the pathway cofactor biosynthesis; (R)-pantothenate biosynthesis; (R)-pantothenate from (R)-pantoate and beta-alanine: step 1/1. Its function is as follows. Catalyzes the condensation of pantoate with beta-alanine in an ATP-dependent reaction via a pantoyl-adenylate intermediate. This chain is Pantothenate synthetase, found in Corynebacterium glutamicum (strain R).